The following is a 196-amino-acid chain: Large ribosomal subunit protein uL18 (196 aa).

It belongs to the universal ribosomal protein uL18 family. In terms of assembly, part of the 50S ribosomal subunit. Contacts the 5S and 23S rRNAs.

Its function is as follows. This is one of the proteins that bind and probably mediate the attachment of the 5S RNA into the large ribosomal subunit, where it forms part of the central protuberance. This Sulfurisphaera tokodaii (strain DSM 16993 / JCM 10545 / NBRC 100140 / 7) (Sulfolobus tokodaii) protein is Large ribosomal subunit protein uL18.